The chain runs to 448 residues: Adenylosuccinate synthetase (448 aa).

Residues 36 to 42 and 64 to 66 each bind GTP; these read GDEGKGK and GHT. Aspartate 37 functions as the Proton acceptor in the catalytic mechanism. Mg(2+) is bound by residues aspartate 37 and glycine 64. IMP is bound by residues 37 to 40, 62 to 65, threonine 154, arginine 168, asparagine 246, threonine 261, and arginine 325; these read DEGK and NAGH. Histidine 65 (proton donor) is an active-site residue. Residue 321–327 coordinates substrate; the sequence is VTTKRKR. GTP-binding positions include arginine 327, 353 to 355, and 436 to 438; these read KLD and GVG.

Belongs to the adenylosuccinate synthetase family. In terms of assembly, homodimer. Requires Mg(2+) as cofactor.

It is found in the cytoplasm. The catalysed reaction is IMP + L-aspartate + GTP = N(6)-(1,2-dicarboxyethyl)-AMP + GDP + phosphate + 2 H(+). It participates in purine metabolism; AMP biosynthesis via de novo pathway; AMP from IMP: step 1/2. In terms of biological role, plays an important role in the de novo pathway and in the salvage pathway of purine nucleotide biosynthesis. Catalyzes the first committed step in the biosynthesis of AMP from IMP. This chain is Adenylosuccinate synthetase, found in Drosophila ananassae (Fruit fly).